Here is a 344-residue protein sequence, read N- to C-terminus: Lipase chaperone (344 aa).

Residues 14-34 traverse the membrane as a helical segment; the sequence is VAVYGAVGLAAIAGVAIWSGA.

This sequence belongs to the lipase chaperone family.

The protein localises to the cell inner membrane. Its function is as follows. May be involved in the folding of the extracellular lipase during its passage through the periplasm. In Burkholderia ambifaria (strain MC40-6), this protein is Lipase chaperone.